The sequence spans 593 residues: Sodium-independent sulfate anion transporter (593 aa).

Residues Met1–Asp34 lie on the Extracellular side of the membrane. The helical transmembrane segment at Phe35 to Val55 threads the bilayer. Residue Ala56 is a topological domain, cytoplasmic. Residues Gly57 to Leu77 form a helical membrane-spanning segment. Residues Gly78–Asp82 lie on the Extracellular side of the membrane. Residues Val83–Phe100 traverse the membrane as a helical segment. Topologically, residues Arg101 to Ala106 are cytoplasmic. The helical transmembrane segment at Val107 to Phe127 threads the bilayer. Over Leu128–His176 the chain is Extracellular. Residues Ile177–Val197 form a helical membrane-spanning segment. Over Leu198–Leu233 the chain is Cytoplasmic. Residues Val234–Val254 traverse the membrane as a helical segment. The Extracellular segment spans residues Leu255 to Gln287. Residues Asp288–Ala308 form a helical membrane-spanning segment. Topologically, residues Lys309–Glu324 are cytoplasmic. Residues Leu325–Gly345 form a helical membrane-spanning segment. At Ser346–Pro361 the chain is on the extracellular side. Residues Ala362 to Phe382 traverse the membrane as a helical segment. Position 383 (Ser383) is a topological domain, cytoplasmic. The chain crosses the membrane as a helical span at residues Tyr384 to Val404. Over Lys405 to Asp417 the chain is Extracellular. Residues Leu418–Ala438 form a helical membrane-spanning segment. Residues Gly439–Pro593 are Cytoplasmic-facing. The 114-residue stretch at Arg453–Glu566 folds into the STAS domain. The tract at residues Gln564–Pro593 is disordered. The span at Gln582 to Pro593 shows a compositional bias: polar residues.

It belongs to the SLC26A/SulP transporter (TC 2.A.53) family. In terms of tissue distribution, abundantly expressed in the cerebellum, with a predominant expression in Purkinje cells (at protein level). Predominantly expressed in the kidney and brain. In the kidney localizes in collecting duct intercalated cells (at protein level). As to expression, predominantly expressed in the brain with lower levels in the kidney.

It localises to the cell membrane. Its subcellular location is the lysosome membrane. The protein localises to the apical cell membrane. The protein resides in the basolateral cell membrane. It carries out the reaction hydrogencarbonate(in) + chloride(out) = hydrogencarbonate(out) + chloride(in). It catalyses the reaction sulfate(in) + H(+)(in) = sulfate(out) + H(+)(out). The enzyme catalyses oxalate(in) + chloride(out) = oxalate(out) + chloride(in). In terms of biological role, sodium-independent anion exchanger mediating bicarbonate, chloride, sulfate and oxalate transport. Exhibits sodium-independent sulfate anion transporter activity that may cooperate with SLC26A2 to mediate DIDS-sensitive sulfate uptake into high endothelial venules endothelial cells (HEVEC). In the kidney, mediates chloride-bicarbonate exchange, facilitating V-ATPase-mediated acid secretion. May function as a chloride channel, playing an important role in moderating chloride homeostasis and neuronal activity in the cerebellum. This is Sodium-independent sulfate anion transporter from Mus musculus (Mouse).